Here is a 150-residue protein sequence, read N- to C-terminus: D-aminoacyl-tRNA deacylase (150 aa).

A Gly-cisPro motif, important for rejection of L-amino acids motif is present at residues 137-138; it reads GP.

It belongs to the DTD family. In terms of assembly, homodimer.

Its subcellular location is the cytoplasm. The enzyme catalyses glycyl-tRNA(Ala) + H2O = tRNA(Ala) + glycine + H(+). It catalyses the reaction a D-aminoacyl-tRNA + H2O = a tRNA + a D-alpha-amino acid + H(+). An aminoacyl-tRNA editing enzyme that deacylates mischarged D-aminoacyl-tRNAs. Also deacylates mischarged glycyl-tRNA(Ala), protecting cells against glycine mischarging by AlaRS. Acts via tRNA-based rather than protein-based catalysis; rejects L-amino acids rather than detecting D-amino acids in the active site. By recycling D-aminoacyl-tRNA to D-amino acids and free tRNA molecules, this enzyme counteracts the toxicity associated with the formation of D-aminoacyl-tRNA entities in vivo and helps enforce protein L-homochirality. This chain is D-aminoacyl-tRNA deacylase, found in Listeria monocytogenes serotype 4b (strain CLIP80459).